A 728-amino-acid polypeptide reads, in one-letter code: 1,4-alpha-glucan branching enzyme GlgB (728 aa).

D405 (nucleophile) is an active-site residue. The active-site Proton donor is the E458.

This sequence belongs to the glycosyl hydrolase 13 family. GlgB subfamily. In terms of assembly, monomer.

The enzyme catalyses Transfers a segment of a (1-&gt;4)-alpha-D-glucan chain to a primary hydroxy group in a similar glucan chain.. It participates in glycan biosynthesis; glycogen biosynthesis. Its function is as follows. Catalyzes the formation of the alpha-1,6-glucosidic linkages in glycogen by scission of a 1,4-alpha-linked oligosaccharide from growing alpha-1,4-glucan chains and the subsequent attachment of the oligosaccharide to the alpha-1,6 position. In Shigella dysenteriae serotype 1 (strain Sd197), this protein is 1,4-alpha-glucan branching enzyme GlgB.